Here is a 498-residue protein sequence, read N- to C-terminus: ATP synthase subunit beta, chloroplastic (498 aa).

172 to 179 is an ATP binding site; sequence GGAGVGKT.

Belongs to the ATPase alpha/beta chains family. F-type ATPases have 2 components, CF(1) - the catalytic core - and CF(0) - the membrane proton channel. CF(1) has five subunits: alpha(3), beta(3), gamma(1), delta(1), epsilon(1). CF(0) has four main subunits: a(1), b(1), b'(1) and c(9-12).

It is found in the plastid. It localises to the chloroplast thylakoid membrane. It carries out the reaction ATP + H2O + 4 H(+)(in) = ADP + phosphate + 5 H(+)(out). In terms of biological role, produces ATP from ADP in the presence of a proton gradient across the membrane. The catalytic sites are hosted primarily by the beta subunits. This is ATP synthase subunit beta, chloroplastic from Nicotiana tomentosiformis (Tobacco).